Reading from the N-terminus, the 198-residue chain is Adenine phosphoribosyltransferase (198 aa).

It belongs to the purine/pyrimidine phosphoribosyltransferase family. In terms of assembly, homodimer.

The protein resides in the cytoplasm. The catalysed reaction is AMP + diphosphate = 5-phospho-alpha-D-ribose 1-diphosphate + adenine. It participates in purine metabolism; AMP biosynthesis via salvage pathway; AMP from adenine: step 1/1. Its function is as follows. Catalyzes a salvage reaction resulting in the formation of AMP, that is energically less costly than de novo synthesis. This Serratia proteamaculans (strain 568) protein is Adenine phosphoribosyltransferase.